Reading from the N-terminus, the 244-residue chain is 23S rRNA (guanosine-2'-O-)-methyltransferase RlmB (244 aa).

S-adenosyl-L-methionine contacts are provided by G196, I216, and L225.

This sequence belongs to the class IV-like SAM-binding methyltransferase superfamily. RNA methyltransferase TrmH family. RlmB subfamily. Homodimer.

Its subcellular location is the cytoplasm. The enzyme catalyses guanosine(2251) in 23S rRNA + S-adenosyl-L-methionine = 2'-O-methylguanosine(2251) in 23S rRNA + S-adenosyl-L-homocysteine + H(+). Specifically methylates the ribose of guanosine 2251 in 23S rRNA. This Photorhabdus laumondii subsp. laumondii (strain DSM 15139 / CIP 105565 / TT01) (Photorhabdus luminescens subsp. laumondii) protein is 23S rRNA (guanosine-2'-O-)-methyltransferase RlmB.